Here is a 297-residue protein sequence, read N- to C-terminus: Probable DNA polymerase III subunit delta (297 aa).

Belongs to the DNA polymerase HolA subunit family. In terms of assembly, component of the DNA clamp loading complex consisting of tau(3):delta(1):delta'(1). The DNA polymerase III holoenzyme complex contains at least 10 different subunits organized into 3 functionally essential subassemblies: the Pol III core, the beta sliding clamp processivity factor and the clamp-loading complex. The Pol III core (subunits alpha, epsilon and theta) contains the polymerase and the 3'-5' exonuclease proofreading activities. The polymerase is tethered to the template via the dimeric beta sliding clamp processivity factor. The DNA clamp-loading complex assembles the beta sliding clamp onto the primed template and plays a central role in the organization and communication at the replication fork.

The enzyme catalyses DNA(n) + a 2'-deoxyribonucleoside 5'-triphosphate = DNA(n+1) + diphosphate. In terms of biological role, part of the beta sliding clamp loading complex, which hydrolyzes ATP to load the beta clamp onto primed DNA to form the DNA replication pre-initiation complex. DNA polymerase III is a complex, multichain enzyme responsible for most of the replicative synthesis in bacteria. This DNA polymerase also exhibits 3'-5' exonuclease activity. The delta subunit is the wrench that will open the beta subunit dimer. The DNA clamp loading complex (tau(3),delta,delta') is thought to load beta dimers onto DNA by binding ATP which alters the complex's conformation so it can bind beta sliding clamp dimers and open them at one interface. Primed DNA is recognized, ATP is hydrolyzed releasing the clamp loading complex and closing the beta sliding clamp ring around the primed DNA. The chain is Probable DNA polymerase III subunit delta from Mycoplasma genitalium (strain ATCC 33530 / DSM 19775 / NCTC 10195 / G37) (Mycoplasmoides genitalium).